We begin with the raw amino-acid sequence, 217 residues long: 8-oxoguanine DNA glycosylase/AP lyase (217 aa).

Residues Lys-138 and Asp-157 contribute to the active site.

This sequence belongs to the type-2 OGG1 family.

It carries out the reaction 2'-deoxyribonucleotide-(2'-deoxyribose 5'-phosphate)-2'-deoxyribonucleotide-DNA = a 3'-end 2'-deoxyribonucleotide-(2,3-dehydro-2,3-deoxyribose 5'-phosphate)-DNA + a 5'-end 5'-phospho-2'-deoxyribonucleoside-DNA + H(+). Functionally, catalyzes the excision of an oxidatively damaged form of guanine (7,8-dihydro-8-oxoguanine = 8-oxoG) from DNA. Also cleaves the DNA backbone at apurinic/apyrimidinic sites (AP sites). The protein is 8-oxoguanine DNA glycosylase/AP lyase of Fusobacterium nucleatum subsp. nucleatum (strain ATCC 25586 / DSM 15643 / BCRC 10681 / CIP 101130 / JCM 8532 / KCTC 2640 / LMG 13131 / VPI 4355).